The chain runs to 134 residues: DNA-directed RNA polymerase subunit omega (134 aa).

It belongs to the RNA polymerase subunit omega family. As to quaternary structure, the RNAP catalytic core consists of 2 alpha, 1 beta, 1 beta' and 1 omega subunit. When a sigma factor is associated with the core the holoenzyme is formed, which can initiate transcription.

The catalysed reaction is RNA(n) + a ribonucleoside 5'-triphosphate = RNA(n+1) + diphosphate. In terms of biological role, promotes RNA polymerase assembly. Latches the N- and C-terminal regions of the beta' subunit thereby facilitating its interaction with the beta and alpha subunits. In Rhizobium etli (strain CIAT 652), this protein is DNA-directed RNA polymerase subunit omega.